A 359-amino-acid polypeptide reads, in one-letter code: Uroporphyrinogen decarboxylase (359 aa).

Residues arginine 28, alanine 30, arginine 32, aspartate 79, tyrosine 157, serine 212, and histidine 335 each contribute to the coproporphyrinogen III site.

The protein belongs to the uroporphyrinogen decarboxylase family. As to quaternary structure, monomer.

It is found in the nucleus. It localises to the cytoplasm. It catalyses the reaction uroporphyrinogen III + 4 H(+) = coproporphyrinogen III + 4 CO2. The catalysed reaction is uroporphyrinogen I + 4 H(+) = coproporphyrinogen I + 4 CO2. The protein operates within porphyrin-containing compound metabolism; protoporphyrin-IX biosynthesis; coproporphyrinogen-III from 5-aminolevulinate: step 4/4. Its function is as follows. Catalyzes the sequential decarboxylation of four acetate groups of uroporphyrinogen-III (octacarboxyporphyrin) to yield coproporphyrinogen-III (tetracarboxyporphyrin) with the formation of intermediate hepta-, hexa- and penta-carboxylate porphyrinogens in the heme biosynthesis pathway. Acts on a number of porphyrinogens, but only coproporphyrinogen III can ultimately be converted to heme. The chain is Uroporphyrinogen decarboxylase (hem12) from Schizosaccharomyces pombe (strain 972 / ATCC 24843) (Fission yeast).